A 435-amino-acid chain; its full sequence is Legumain (435 aa).

A signal peptide spans 1–17 (MTWRVAVLLSLVLGAGA). N-linked (GlcNAc...) asparagine glycosylation occurs at N93. The active site involves H150. The N-linked (GlcNAc...) asparagine glycan is linked to N169. The active-site Nucleophile is the C191. 2 N-linked (GlcNAc...) asparagine glycosylation sites follow: N265 and N274. Positions 326 to 435 (DVKESQNLIG…AMDKVCLSHY (110 aa)) are excised as a propeptide. Intrachain disulfides connect C380/C414 and C392/C431.

Belongs to the peptidase C13 family. As to quaternary structure, homodimer before autocatalytic removal of the propeptide. Monomer after autocatalytic processing. May interact with integrins. Post-translationally, glycosylated. Activated by autocatalytic processing at pH 4. In terms of tissue distribution, detected in kidney proximal tubules (at protein level). Ubiquitous. Particularly abundant in kidney and placenta.

The protein localises to the lysosome. It carries out the reaction Hydrolysis of proteins and small molecule substrates at -Asn-|-Xaa- bonds.. Inhibited by cystatin-C. Has a strict specificity for hydrolysis of asparaginyl bonds. Can also cleave aspartyl bonds slowly, especially under acidic conditions. Involved in the processing of proteins for MHC class II antigen presentation in the lysosomal/endosomal system. Also involved in MHC class I antigen presentation in cross-presenting dendritic cells by mediating cleavage and maturation of Perforin-2 (MPEG1), thereby promoting antigen translocation in the cytosol. Required for normal lysosomal protein degradation in renal proximal tubules. Required for normal degradation of internalized EGFR. Plays a role in the regulation of cell proliferation via its role in EGFR degradation. This Mus musculus (Mouse) protein is Legumain (Lgmn).